The primary structure comprises 130 residues: Sirohydrochlorin cobaltochelatase (130 aa).

The active-site Proton acceptor is the His-12. Position 12 (His-12) interacts with Co(2+). Residue His-12 coordinates Ni(2+). Substrate-binding positions include Glu-48 and 73–78; that span reads LASGVH. Residue His-78 coordinates Co(2+). His-78 is a Ni(2+) binding site.

Belongs to the CbiX family. CbiXS subfamily. Homotetramer; dimer of dimers.

The catalysed reaction is Co-sirohydrochlorin + 2 H(+) = sirohydrochlorin + Co(2+). It carries out the reaction Ni-sirohydrochlorin + 2 H(+) = sirohydrochlorin + Ni(2+). It participates in cofactor biosynthesis; adenosylcobalamin biosynthesis; cob(II)yrinate a,c-diamide from sirohydrochlorin (anaerobic route): step 1/10. Functionally, catalyzes the insertion of Co(2+) into sirohydrochlorin as part of the anaerobic pathway to cobalamin biosynthesis (Potential). Involved in the biosynthesis of the unique nickel-containing tetrapyrrole coenzyme F430, the prosthetic group of methyl-coenzyme M reductase (MCR), which plays a key role in methanogenesis and anaerobic methane oxidation. Catalyzes the insertion of Ni(2+) into sirohydrochlorin to yield Ni-sirohydrochlorin. The chain is Sirohydrochlorin cobaltochelatase from Methanosarcina acetivorans (strain ATCC 35395 / DSM 2834 / JCM 12185 / C2A).